We begin with the raw amino-acid sequence, 352 residues long: C-C chemokine receptor type 5 (352 aa).

Residues 1–30 (MDYQVSSPTYDIDYYTSEPCQKINVKQIAA) lie on the Extracellular side of the membrane. Y3 carries the sulfotyrosine modification. O-linked (GalNAc...) serine glycans are attached at residues S6 and S7. Sulfotyrosine occurs at positions 10, 14, and 15. 2 disulfide bridges follow: C20/C269 and C101/C178. A helical membrane pass occupies residues 31–58 (RLLPPLYSLVFIFGFVGNILVVLILINC). Over 59–68 (KRLKSMTDIY) the chain is Cytoplasmic. The helical transmembrane segment at 69 to 89 (LLNLAISDLLFLLTVPFWAHY) threads the bilayer. Residues 90–102 (AAAQWDFGNTMCQ) lie on the Extracellular side of the membrane. A helical transmembrane segment spans residues 103–124 (LLTGLYFIGFFSGIFFIILLTI). Topologically, residues 125 to 141 (DRYLAIVHAVFALKART) are cytoplasmic. A helical transmembrane segment spans residues 142–166 (VTFGVVTSVITWVVAVFASLPGIIF). The Extracellular portion of the chain corresponds to 167–198 (TRSQREGLHYTCSSHFPYSQYQFWKNFQTLKM). A helical transmembrane segment spans residues 199-218 (VILGLVLPLLVMVICYSGIL). Over 219-235 (KTLLRCRNEKKRHRAVR) the chain is Cytoplasmic. The helical transmembrane segment at 236–260 (LIFTIMIVYFLFWAPYNIVLLLNTF) threads the bilayer. The Extracellular portion of the chain corresponds to 261–277 (QEFFGLNNCSSSNRLDQ). A helical transmembrane segment spans residues 278–301 (AMQVTETLGMTHCCINPIIYAFVG). The Cytoplasmic segment spans residues 302–352 (EKFRNYLLVFFQKHIAKRFCKCCSIFQQEAPERASSVYTRSTGEQEISVGL). Residues C321, C323, and C324 are each lipidated (S-palmitoyl cysteine). A phosphoserine; by BARK1 mark is found at S336, S337, S342, and S349.

The protein belongs to the G-protein coupled receptor 1 family. As to quaternary structure, interacts with PRAF2. Efficient ligand binding to CCL3/MIP-1alpha and CCL4/MIP-1beta requires sulfation, O-glycosylation and sialic acid modifications. Glycosylation on Ser-6 is required for efficient binding of CCL4. Interacts with GRK2. Interacts with ARRB1 and ARRB2. Interacts with CNIH4. Interacts with S100A4; this interaction stimulates T-lymphocyte chemotaxis. Sulfated on at least 2 of the N-terminal tyrosines. Sulfation is required for efficient binding of the chemokines, CCL3 and CCL4. In terms of processing, palmitoylation in the C-terminal is important for cell surface expression. Post-translationally, phosphorylation on serine residues in the C-terminal is stimulated by binding CC chemokines especially by APO-RANTES. O-glycosylated, but not N-glycosylated. Ser-6 appears to be the major site even if Ser-7 may be also O-glycosylated. Also sialylated glycans present which contribute to chemokine binding. Thr-16 and Ser-17 may also be glycosylated and, if so, with small moieties such as a T-antigen.

Its subcellular location is the cell membrane. In terms of biological role, receptor for a number of inflammatory CC-chemokines including CCL3/MIP-1-alpha, CCL4/MIP-1-beta and RANTES and subsequently transduces a signal by increasing the intracellular calcium ion level. May play a role in the control of granulocytic lineage proliferation or differentiation. Participates in T-lymphocyte migration to the infection site by acting as a chemotactic receptor. The polypeptide is C-C chemokine receptor type 5 (CCR5) (Macaca fascicularis (Crab-eating macaque)).